A 59-amino-acid polypeptide reads, in one-letter code: Small, acid-soluble spore protein H (59 aa).

It belongs to the SspH family.

It is found in the spore core. The chain is Small, acid-soluble spore protein H from Bacillus licheniformis (strain ATCC 14580 / DSM 13 / JCM 2505 / CCUG 7422 / NBRC 12200 / NCIMB 9375 / NCTC 10341 / NRRL NRS-1264 / Gibson 46).